Consider the following 296-residue polypeptide: Ribonuclease HIII (296 aa).

The 217-residue stretch at 80 to 296 (LALIGSDEVG…NTKKAYQRLK (217 aa)) folds into the RNase H type-2 domain. D86, E87, and D191 together coordinate a divalent metal cation.

It belongs to the RNase HII family. RnhC subfamily. Requires Mn(2+) as cofactor. Mg(2+) serves as cofactor.

It is found in the cytoplasm. It catalyses the reaction Endonucleolytic cleavage to 5'-phosphomonoester.. Its function is as follows. Endonuclease that specifically degrades the RNA of RNA-DNA hybrids. This Streptococcus thermophilus (strain CNRZ 1066) protein is Ribonuclease HIII.